Consider the following 268-residue polypeptide: Activator of basal transcription 1 (268 aa).

The stretch at Lys-6–Asn-38 forms a coiled coil. The RRM domain maps to Gly-47 to Leu-144. Residues Ala-163–Gln-193 adopt a coiled-coil conformation. A disordered region spans residues Ala-200–Gln-242. Residues Arg-206–Pro-217 are compositionally biased toward polar residues.

This sequence belongs to the ESF2/ABP1 family. Interacts with IGHMBP2. Interacts with ESF1/ABTAP.

The protein resides in the nucleus. It localises to the nucleolus. May be a novel TATA-binding protein (TBP) which can function as a basal transcription activator. Can act as a regulator of basal transcription for class II genes. This chain is Activator of basal transcription 1 (Abt1), found in Rattus norvegicus (Rat).